A 662-amino-acid chain; its full sequence is p-hydroxybenzoic acid efflux pump subunit AaeB (662 aa).

11 consecutive transmembrane segments (helical) span residues 22–42 (FAFK…HLQL), 52–72 (AAIV…SGAI), 76–96 (GMLR…IIIA), 102–122 (VVML…SSLV), 129–149 (VFGL…GTPL), 161–181 (EIVL…PRSI), 378–398 (LFWL…IAVV), 415–435 (FLFG…FIMP), 439–459 (QSML…GLEV), 467–487 (LGAL…TFHI), and 491–511 (LDSA…ILLI).

Belongs to the aromatic acid exporter ArAE (TC 2.A.85) family.

It is found in the cell inner membrane. Functionally, forms an efflux pump with AaeA. Could function as a metabolic relief valve, allowing to eliminate certain compounds when they accumulate to high levels in the cell. The sequence is that of p-hydroxybenzoic acid efflux pump subunit AaeB from Pectobacterium carotovorum subsp. carotovorum (strain PC1).